A 339-amino-acid chain; its full sequence is tRNA methyltransferase 10 homolog A (339 aa).

Disordered regions lie at residues 1–90 (MSSE…HDRK) and 282–339 (DKAC…SLPH). Basic and acidic residues predominate over residues 14–35 (NVDKKQGINEDQEESQKPRLGE). The stretch at 52 to 81 (KQWEEQRELRKQKRKEKRKRKKLERQCQME) forms a coiled coil. Basic residues predominate over residues 61–74 (RKQKRKEKRKRKKL). The region spanning 89 to 279 (RKRVRRDVVH…TILPQRKGAV (191 aa)) is the SAM-dependent MTase TRM10-type domain. Residues 300–309 (GGSDSDSSEE) are compositionally biased toward acidic residues. The span at 310-330 (EYSRNELDSPHEEKQDKENHT) shows a compositional bias: basic and acidic residues. Serine 336 is subject to Phosphoserine.

It belongs to the class IV-like SAM-binding methyltransferase superfamily. TRM10 family. Interacts with tRNA. In terms of tissue distribution, expressed in embryonic and fetal brain. It is expressed throughout the dorsal telencephalon at 8 and 11 weeks of gestation, with highest expression in ventricular zone and marginal zone. Detected in cerebellar cortex and nuclei, but not in dorsal telencephalon, at later stages.

It is found in the nucleus. Its subcellular location is the nucleolus. It carries out the reaction guanosine(9) in tRNA + S-adenosyl-L-methionine = N(1)-methylguanosine(9) in tRNA + S-adenosyl-L-homocysteine + H(+). In terms of biological role, S-adenosyl-L-methionine-dependent guanine N(1)-methyltransferase that catalyzes the formation of N(1)-methylguanine at position 9 (m1G9) in tRNAs. Probably not able to catalyze formation of N(1)-methyladenine at position 9 (m1A9) in tRNAs. The polypeptide is tRNA methyltransferase 10 homolog A (TRMT10A) (Homo sapiens (Human)).